We begin with the raw amino-acid sequence, 434 residues long: Arginine/serine-rich coiled-coil protein 2 (434 aa).

The segment covering 1–27 (MAASDTERDGLAPEKTSPDRDKKKEQS) has biased composition (basic and acidic residues). The tract at residues 1 to 230 (MAASDTERDG…PSPPPFRGRN (230 aa)) is disordered. Alanine 2 is modified (N-acetylalanine). The residue at position 4 (serine 4) is a Phosphoserine. Residues threonine 6 and threonine 16 each carry the phosphothreonine modification. Phosphoserine is present on residues serine 17, serine 30, and serine 32. Residues 35–51 (ASKHHYSRSRSRSRERK) show a composition bias toward basic residues. A compositionally biased stretch (basic and acidic residues) spans 66–111 (RSKEGRRHESKDKSSKKHKSEEHNDKEHSSDKGRERLNSSENGEDR). Serine 104 is subject to Phosphoserine. The segment covering 112-214 (HKRKERKSSR…KRIEKPRRFS (103 aa)) has biased composition (basic residues). Residues 230 to 270 (NTAMDAQEALARRLERAKKLQEQREKEMVEKQKQQEIAAAA) adopt a coiled-coil conformation. Lysine 375 participates in a covalent cross-link: Glycyl lysine isopeptide (Lys-Gly) (interchain with G-Cter in SUMO1); alternate. Lysine 375 participates in a covalent cross-link: Glycyl lysine isopeptide (Lys-Gly) (interchain with G-Cter in SUMO2); alternate. Serine 376 is subject to Phosphoserine.

It belongs to the RSRC2 family.

The chain is Arginine/serine-rich coiled-coil protein 2 (RSRC2) from Homo sapiens (Human).